A 452-amino-acid chain; its full sequence is Protein MLF3 (452 aa).

A phosphoserine mark is found at serine 8, serine 11, serine 14, serine 56, serine 74, and serine 79. The disordered stretch occupies residues 61–94 (SGSEVRTPSLRKNSNNVSSPLDNVIPTSRSASNS). Polar residues predominate over residues 64-81 (EVRTPSLRKNSNNVSSPL). A Phosphothreonine modification is found at threonine 121. Serine 145, serine 156, and serine 160 each carry phosphoserine. A Phosphothreonine modification is found at threonine 169. Phosphoserine is present on serine 171. Residues 171-182 (SATLPSSESSPA) are compositionally biased toward polar residues. Residues 171–220 (SATLPSSESSPASPDLKLSRSHSHSAATRPTLNNINNTGMTTTTSNGEPN) are disordered. Position 173 is a phosphothreonine (threonine 173). Residues serine 183 and serine 189 each carry the phosphoserine modification. Over residues 201–216 (TLNNINNTGMTTTTSN) the composition is skewed to low complexity. Tyrosine 227 is subject to Phosphotyrosine. Phosphoserine occurs at positions 228, 257, and 265. 2 disordered regions span residues 290-321 (PATS…NRSS) and 348-402 (IESS…AIGK). Tyrosine 295 is subject to Phosphotyrosine. Serine 297, serine 320, and serine 353 each carry phosphoserine. Residues 299-321 (QQSARQYSNNANNNAKSPKNRSS) are compositionally biased toward low complexity. Positions 365–383 (PSFPLSSSLRSSANLASNP) are enriched in low complexity. Polar residues predominate over residues 384–398 (ELATQTPLSTSSSYT). A Phosphoserine modification is found at serine 439.

To yeast VHS2.

The protein localises to the cytoplasm. This is Protein MLF3 (MLF3) from Saccharomyces cerevisiae (strain ATCC 204508 / S288c) (Baker's yeast).